Here is a 333-residue protein sequence, read N- to C-terminus: Biotin synthase (333 aa).

The 231-residue stretch at 51–281 (HFGNQVSLCG…DVHITICGGR (231 aa)) folds into the Radical SAM core domain. [4Fe-4S] cluster contacts are provided by Cys-69, Cys-73, and Cys-76. Cys-206 contributes to the [2Fe-2S] cluster binding site.

This sequence belongs to the radical SAM superfamily. Biotin synthase family. In terms of assembly, homodimer. [4Fe-4S] cluster is required as a cofactor. It depends on [2Fe-2S] cluster as a cofactor.

The catalysed reaction is (4R,5S)-dethiobiotin + (sulfur carrier)-SH + 2 reduced [2Fe-2S]-[ferredoxin] + 2 S-adenosyl-L-methionine = (sulfur carrier)-H + biotin + 2 5'-deoxyadenosine + 2 L-methionine + 2 oxidized [2Fe-2S]-[ferredoxin]. It participates in cofactor biosynthesis; biotin biosynthesis; biotin from 7,8-diaminononanoate: step 2/2. Functionally, catalyzes the conversion of dethiobiotin (DTB) to biotin by the insertion of a sulfur atom into dethiobiotin via a radical-based mechanism. The polypeptide is Biotin synthase (Trichlorobacter lovleyi (strain ATCC BAA-1151 / DSM 17278 / SZ) (Geobacter lovleyi)).